The following is a 273-amino-acid chain: Chlorophyll a-b binding protein 8, chloroplastic (273 aa).

A chloroplast-targeting transit peptide spans methionine 1–threonine 32. N2-acetylarginine is present on arginine 33. Tryptophan 56 is a chlorophyll b binding site. Chlorophyll a is bound by residues phenylalanine 76, serine 82, and glutamate 100. Arginine 105 contributes to the chlorophyll b binding site. A helical transmembrane segment spans residues phenylalanine 106–isoleucine 126. Positions 140, 167, and 170 each coordinate chlorophyll b. The chlorophyll a site is built by lysine 224, glutamate 225, asparagine 228, arginine 230, glutamine 242, and histidine 257. Residues leucine 231–tyrosine 251 form a helical membrane-spanning segment.

Belongs to the light-harvesting chlorophyll a/b-binding (LHC) protein family. The LHC complex consists of chlorophyll a-b binding proteins. It depends on Binds at least 14 chlorophylls (8 Chl-a and 6 Chl-b) and carotenoids such as lutein and neoxanthin. as a cofactor. Photoregulated by reversible phosphorylation of its threonine residues.

It is found in the plastid. Its subcellular location is the chloroplast thylakoid membrane. Functionally, the light-harvesting complex (LHC) functions as a light receptor, it captures and delivers excitation energy to photosystems with which it is closely associated. The chain is Chlorophyll a-b binding protein 8, chloroplastic (CAB8) from Solanum lycopersicum (Tomato).